A 321-amino-acid chain; its full sequence is Putative glucan endo-1,3-beta-glucosidase GVI (321 aa).

Positions 1–6 (LAGVEG) are cleaved as a signal peptide. The active-site Proton donor is the Glu-100. The Nucleophile role is filled by Glu-241.

This sequence belongs to the glycosyl hydrolase 17 family.

It catalyses the reaction Hydrolysis of (1-&gt;3)-beta-D-glucosidic linkages in (1-&gt;3)-beta-D-glucans.. May provide a degree of protection against microbial invasion of germinated barley grain through its ability to degrade fungal cell wall polysaccharides. This is Putative glucan endo-1,3-beta-glucosidase GVI from Hordeum vulgare (Barley).